The following is a 385-amino-acid chain: Putative ESX-1 scaffolding and assembly protein SaeC (385 aa).

It is found in the cytoplasm. Its function is as follows. May be involved in assembly of the ESX-1 / type VII specialized secretion system (T7SS), which exports several proteins including EsxA and EsxB. Involved in DNA conjugation in recipient (MKD8) strain. The sequence is that of Putative ESX-1 scaffolding and assembly protein SaeC from Mycolicibacterium smegmatis (strain ATCC 700084 / mc(2)155) (Mycobacterium smegmatis).